A 329-amino-acid chain; its full sequence is Ferredoxin--NADP reductase 2 (329 aa).

Threonine 18, glutamate 37, glutamine 45, tyrosine 50, valine 90, phenylalanine 124, aspartate 285, and serine 326 together coordinate FAD.

This sequence belongs to the ferredoxin--NADP reductase type 2 family. Homodimer. FAD is required as a cofactor.

The enzyme catalyses 2 reduced [2Fe-2S]-[ferredoxin] + NADP(+) + H(+) = 2 oxidized [2Fe-2S]-[ferredoxin] + NADPH. This Bacillus mycoides (strain KBAB4) (Bacillus weihenstephanensis) protein is Ferredoxin--NADP reductase 2.